The following is an 81-amino-acid chain: MNPLIPAASVIAAGLAVGLASIGPGVGQGTAAGQAVEGIARQPEAEGKIRGTLLLSLAFMEALTIYGLVVALALLFANPFV.

Helical transmembrane passes span Pro-3–Gly-23 and Leu-57–Ala-77.

Belongs to the ATPase C chain family. In terms of assembly, F-type ATPases have 2 components, F(1) - the catalytic core - and F(0) - the membrane proton channel. F(1) has five subunits: alpha(3), beta(3), gamma(1), delta(1), epsilon(1). F(0) has four main subunits: a(1), b(1), b'(1) and c(10-14). The alpha and beta chains form an alternating ring which encloses part of the gamma chain. F(1) is attached to F(0) by a central stalk formed by the gamma and epsilon chains, while a peripheral stalk is formed by the delta, b and b' chains.

It is found in the plastid. The protein resides in the chloroplast thylakoid membrane. In terms of biological role, f(1)F(0) ATP synthase produces ATP from ADP in the presence of a proton or sodium gradient. F-type ATPases consist of two structural domains, F(1) containing the extramembraneous catalytic core and F(0) containing the membrane proton channel, linked together by a central stalk and a peripheral stalk. During catalysis, ATP synthesis in the catalytic domain of F(1) is coupled via a rotary mechanism of the central stalk subunits to proton translocation. Its function is as follows. Key component of the F(0) channel; it plays a direct role in translocation across the membrane. A homomeric c-ring of between 10-14 subunits forms the central stalk rotor element with the F(1) delta and epsilon subunits. The chain is ATP synthase subunit c, chloroplastic from Cycas taitungensis (Prince sago).